The following is a 638-amino-acid chain: 1-deoxy-D-xylulose-5-phosphate synthase (638 aa).

Thiamine diphosphate-binding positions include H76 and 117 to 119 (AHS). Residue D148 participates in Mg(2+) binding. Residues 149–150 (GS), N177, Y287, and E369 contribute to the thiamine diphosphate site. N177 lines the Mg(2+) pocket.

The protein belongs to the transketolase family. DXPS subfamily. As to quaternary structure, homodimer. Mg(2+) serves as cofactor. The cofactor is thiamine diphosphate.

It carries out the reaction D-glyceraldehyde 3-phosphate + pyruvate + H(+) = 1-deoxy-D-xylulose 5-phosphate + CO2. Its pathway is metabolic intermediate biosynthesis; 1-deoxy-D-xylulose 5-phosphate biosynthesis; 1-deoxy-D-xylulose 5-phosphate from D-glyceraldehyde 3-phosphate and pyruvate: step 1/1. In terms of biological role, catalyzes the acyloin condensation reaction between C atoms 2 and 3 of pyruvate and glyceraldehyde 3-phosphate to yield 1-deoxy-D-xylulose-5-phosphate (DXP). The polypeptide is 1-deoxy-D-xylulose-5-phosphate synthase (Rhodopseudomonas palustris (strain HaA2)).